Consider the following 306-residue polypeptide: Phospho-N-acetylmuramoyl-pentapeptide-transferase (306 aa).

Helical transmembrane passes span 2 to 22, 47 to 67, 71 to 91, 105 to 125, 131 to 151, 162 to 182, 185 to 205, 209 to 229, 236 to 256, and 284 to 304; these read IALLSINFVAFFVFLLILKYW, SGTPVMGGIVFILAVFPFLFF, FFISLSTILFGLLGLVDDLKL, IFLSFIITLILYVFSPHDYKI, LIIDSSILYIFLFFIILIAVP, GLAGGTSLVTLIFLLVYSFHF, IALEISLMITALLAFLWFNSH, IFMGDVGAFALGGFIASLSVV, LIFLSGIFLIESLSVFIQVFF, and IVWRFYIIHLLIIIGGLVLWY.

This sequence belongs to the glycosyltransferase 4 family. MraY subfamily. Requires Mg(2+) as cofactor.

It is found in the cell inner membrane. It catalyses the reaction UDP-N-acetyl-alpha-D-muramoyl-L-alanyl-gamma-D-glutamyl-meso-2,6-diaminopimeloyl-D-alanyl-D-alanine + di-trans,octa-cis-undecaprenyl phosphate = di-trans,octa-cis-undecaprenyl diphospho-N-acetyl-alpha-D-muramoyl-L-alanyl-D-glutamyl-meso-2,6-diaminopimeloyl-D-alanyl-D-alanine + UMP. Its pathway is cell wall biogenesis; peptidoglycan biosynthesis. Its function is as follows. Catalyzes the initial step of the lipid cycle reactions in the biosynthesis of the cell wall peptidoglycan: transfers peptidoglycan precursor phospho-MurNAc-pentapeptide from UDP-MurNAc-pentapeptide onto the lipid carrier undecaprenyl phosphate, yielding undecaprenyl-pyrophosphoryl-MurNAc-pentapeptide, known as lipid I. This chain is Phospho-N-acetylmuramoyl-pentapeptide-transferase, found in Dictyoglomus thermophilum (strain ATCC 35947 / DSM 3960 / H-6-12).